Reading from the N-terminus, the 71-residue chain is Large ribosomal subunit protein bL31 (71 aa).

4 residues coordinate Zn(2+): Cys16, Cys18, Cys37, and Cys40.

It belongs to the bacterial ribosomal protein bL31 family. Type A subfamily. In terms of assembly, part of the 50S ribosomal subunit. Requires Zn(2+) as cofactor.

Functionally, binds the 23S rRNA. The sequence is that of Large ribosomal subunit protein bL31 from Pseudomonas entomophila (strain L48).